Reading from the N-terminus, the 346-residue chain is MCASATRPQPSASNNVKKIILPDLVSHCTFKLRHNRHRKQVTTETKKWLFKDGNLLGQKERAYHGLKCGLLTSMCYPDAGYPQLRVVNDFLTYLFHLDNLSDEMDNRGTTTTADEVLNSLYHPHTWRSSARVGKMTRDFYKRLVLTASPGAQQRFIETFDFFFQSVTQQALDRASGVIPDLESYISLRRDTSGCKPCWAMIEYANNLDIPDEVMDHPIIRSLGEATNDLVTWSNDIFSYSVEQSKGHTHNMIPVVMYQEGLDLQAAVDFVGDMCRQSINRFVEEKARLPSWGPKIDQDVAIYVQGLADWIVGSLHWSFETERYFGKSGRQVKASRIVDLLPRQRLP.

Asp-98, Asn-234, Ser-238, and Glu-242 together coordinate Mg(2+). The short motif at 98 to 102 is the DDXXD motif element; it reads DNLSD. Positions 322 and 323 each coordinate (2E,6E)-farnesyl diphosphate.

It belongs to the terpene synthase family. The cofactor is Mg(2+).

The enzyme catalyses (2E,6E)-farnesyl diphosphate = delta-cadinene + diphosphate. It carries out the reaction (2E,6E)-farnesyl diphosphate = alpha-muurolene + diphosphate. The catalysed reaction is (2E,6E)-farnesyl diphosphate = gamma-muurolene + diphosphate. It catalyses the reaction (2E,6E)-farnesyl diphosphate = alpha-selinene + diphosphate. In terms of biological role, terpene cyclase that catalyzes the cyclization of farnesyl diphosphate (FPP) to various sesquiterpenes, including alpha-muurolene, gamma-muurolene, alpha-selinene, beta-selinene, delta-cadinene, alpha-cadinol and delta-cadinol. Delta-cadinene is the major product of Agr1. The polypeptide is Sesquiterpene synthase Agr1 (Cyclocybe aegerita (Black poplar mushroom)).